Reading from the N-terminus, the 156-residue chain is ATP synthase subunit b (156 aa).

A helical transmembrane segment spans residues 7-26; it reads LIGQLIAFALFVAFCMKYVW.

It belongs to the ATPase B chain family. In terms of assembly, F-type ATPases have 2 components, F(1) - the catalytic core - and F(0) - the membrane proton channel. F(1) has five subunits: alpha(3), beta(3), gamma(1), delta(1), epsilon(1). F(0) has three main subunits: a(1), b(2) and c(10-14). The alpha and beta chains form an alternating ring which encloses part of the gamma chain. F(1) is attached to F(0) by a central stalk formed by the gamma and epsilon chains, while a peripheral stalk is formed by the delta and b chains.

It is found in the cell inner membrane. Its function is as follows. F(1)F(0) ATP synthase produces ATP from ADP in the presence of a proton or sodium gradient. F-type ATPases consist of two structural domains, F(1) containing the extramembraneous catalytic core and F(0) containing the membrane proton channel, linked together by a central stalk and a peripheral stalk. During catalysis, ATP synthesis in the catalytic domain of F(1) is coupled via a rotary mechanism of the central stalk subunits to proton translocation. Functionally, component of the F(0) channel, it forms part of the peripheral stalk, linking F(1) to F(0). The sequence is that of ATP synthase subunit b from Haemophilus ducreyi (strain 35000HP / ATCC 700724).